We begin with the raw amino-acid sequence, 522 residues long: Calcium-dependent protein kinase 14 (522 aa).

Low complexity-rich tracts occupy residues 1 to 12 (MGNCCPPGSSSE) and 19 to 45 (SSGS…AAPA). Residues 1–58 (MGNCCPPGSSSEPDPPPASSGSSRPAGSAGAAASPATISPSAAPAPAKPPAPIGPVLG) form a disordered region. The N-myristoyl glycine moiety is linked to residue Gly-2. In terms of domain architecture, Protein kinase spans 68–326 (YTVGKELGRG…AYDVLNHPWI (259 aa)). Residues 74–82 (LGRGQFGVT) and Lys-97 contribute to the ATP site. Asp-192 (proton acceptor) is an active-site residue. The tract at residues 332–362 (APDTPLDNAVLGRLKQFRAMNQFKKAALRVI) is autoinhibitory domain. EF-hand domains follow at residues 369–404 (EEIR…KGTK), 405–440 (LTEA…MNRM), 441–476 (DREE…KGLM), and 480–511 (EIKD…GDPE). Asp-382, Asp-384, Ser-386, Thr-388, Glu-393, Asp-418, Asp-420, Asn-422, Thr-424, Glu-429, Asp-454, Asp-456, Ser-458, Tyr-460, Glu-465, Asp-489, Asp-491, Asp-493, Arg-495, and Glu-500 together coordinate Ca(2+).

This sequence belongs to the protein kinase superfamily. Ser/Thr protein kinase family. CDPK subfamily.

It is found in the membrane. The catalysed reaction is L-seryl-[protein] + ATP = O-phospho-L-seryl-[protein] + ADP + H(+). The enzyme catalyses L-threonyl-[protein] + ATP = O-phospho-L-threonyl-[protein] + ADP + H(+). Its activity is regulated as follows. Activated by calcium. Autophosphorylation may play an important role in the regulation of the kinase activity. Functionally, may play a role in signal transduction pathways that involve calcium as a second messenger. In Oryza sativa subsp. japonica (Rice), this protein is Calcium-dependent protein kinase 14.